We begin with the raw amino-acid sequence, 316 residues long: Glutathione synthetase (316 aa).

The ATP-grasp domain occupies 125–310 (KLFTAWFSDL…ITGMLMDAIE (186 aa)). R256 carries an N-beta-linked (GlcNAc) arginine glycan. Mg(2+)-binding residues include E281 and N283.

Belongs to the prokaryotic GSH synthase family. The cofactor is Mg(2+). Mn(2+) serves as cofactor.

It carries out the reaction gamma-L-glutamyl-L-cysteine + glycine + ATP = glutathione + ADP + phosphate + H(+). It functions in the pathway sulfur metabolism; glutathione biosynthesis; glutathione from L-cysteine and L-glutamate: step 2/2. This Escherichia coli O127:H6 (strain E2348/69 / EPEC) protein is Glutathione synthetase.